Consider the following 43-residue polypeptide: uncharacterized protein (43 aa).

Residues 13 to 43 (QLPRLSRPRQSHLPAQTPQPRLSYPKTRRQI) are disordered.

This is an uncharacterized protein from Clover yellow mosaic virus (CYMV).